Consider the following 894-residue polypeptide: MEIKPVEVIDGVPVFKPSMMEFANFQYFIDEITKFGIENGIVKVIPPKEWLELLEGSPPAESLKTIQLDSPIQQQAKRWDKHENGVFSIENEYDNKSYNLTQWKNLAESLDSRISQGDFNDKTLKENCRVDSQQDCYDLAQLQILESDFWKTIAFSKPFYAVDENSSIFPYDLTLWNLNNLPDSINSSNRRLLTGQSKCIFPWHLDEQNKCSINYLHFGAPKQWYSIPSANTDQFLKILSKEPSSNKENCPAFIRHQNIITSPDFLRKNNIKFNRVVQFQHEFIITFPYCMYSGFNYGYNFGESIEFILDQQAVVRKQPLKCGCGNKKEERKSGPFSNLSYDSNESEQRGSITDNDNDLFQKVRSFDELLNHSSQELQNLEDNKNPLFSNINMNRPQSSSLRSTTPNGVNQFLNMNQTTISRISSPLLSRMMDLSNIVEPTLDDPGSKFKRKVLTPQLPQMNIPSNSSNFGTPSLTNTNSLLSNITATSTNPSTTTNGSQNHNNVNANGINTSAAASINNNISSTNNSANNSSSNNNVSTVPSSMMHSSTLNGTSGLGGDNDDNMLALSLATLANSATASPRLTLPPLSSPMNPNGHTSYNGNMMNNNSGNGSNGSNSYSNGVTTAAATTTSAPHNLSIVSPNPTYSPNPLSLYLTNSKNPLNSGLAPLSPSTSNIPFLKRNNVVTLNISREASKSPISSFVNDYRSPLGVSNPLMYSSTINDYSNGTGIRQNSNNINPLDAGPSFSPLHKKPKILNGNDNSNLDSNNFDYSFTGNKQESNPSILNNNTNNNDNYRTSSMNNNGNNYQAHSSKFGENEVIMSDHGKIYICRECNRQFSSGHHLTRHKKSVHSGEKPHSCPRCGKRFKRRDHVLQHLNKKIPCTQEMENTKLAES.

The 42-residue stretch at Val-12 to Leu-53 folds into the JmjN domain. Ser-70 carries the post-translational modification Phosphoserine. The stretch at Glu-90–Leu-110 forms a coiled coil. The JmjC domain maps to Pro-170–Cys-324. Residues Arg-316–Lys-332 carry the Bipartite nuclear localization signal motif. A disordered region spans residues Cys-324–Asn-355. Positions Pro-335–Asp-354 are enriched in polar residues. A Phosphoserine modification is found at Ser-343. A coiled-coil region spans residues Gln-361 to Asn-385. The span at Asn-521 to Thr-554 shows a compositional bias: low complexity. The tract at residues Asn-521–Gly-558 is disordered. Ser-690, Ser-694, Ser-696, Ser-734, and Ser-747 each carry phosphoserine. The span at Leu-756–Asn-768 shows a compositional bias: low complexity. The tract at residues Leu-756–His-810 is disordered. Polar residues-rich tracts occupy residues Phe-769 to Leu-785 and Tyr-795 to His-810. A C2H2-type 1 zinc finger spans residues Tyr-828–His-851. The C2H2-type 2; atypical zinc-finger motif lies at His-857–Cys-882.

The protein resides in the nucleus. Transcription factor involved in the regulation of gene expression upon nutrient starvation. Recognizes and binds to the post-diauxic-shift element 5'-T[AT]AGGGAT-3' in the promoter region. Can act as a transcriptional activator (e.g. of stress genes like SSA3, HSP12 and HSP26) as well as a repressor (e.g. of pyrophosphate phosphatase DPP1). GIS1 also acts as a DNA damage-responsive transcriptional repressor of photolyase PHR1. The sequence is that of Transcriptional activator/repressor GIS1 (GIS1) from Saccharomyces cerevisiae (strain ATCC 204508 / S288c) (Baker's yeast).